A 118-amino-acid polypeptide reads, in one-letter code: Non-specific lipid-transfer protein 2 (118 aa).

A signal peptide spans 1–25 (MAGVMKLACMVLACMIVAGPITANA). 4 disulfides stabilise this stretch: cysteine 29/cysteine 76, cysteine 39/cysteine 53, cysteine 54/cysteine 100, and cysteine 74/cysteine 114.

It belongs to the plant LTP family.

Functionally, plant non-specific lipid-transfer proteins transfer phospholipids as well as galactolipids across membranes. May play a role in wax or cutin deposition in the cell walls of expanding epidermal cells and certain secretory tissues. In Arabidopsis thaliana (Mouse-ear cress), this protein is Non-specific lipid-transfer protein 2 (LTP2).